The sequence spans 203 residues: Urease accessory protein UreG (203 aa).

14–21 provides a ligand contact to GTP; the sequence is GPVGSGKT.

This sequence belongs to the SIMIBI class G3E GTPase family. UreG subfamily. As to quaternary structure, homodimer. UreD, UreF and UreG form a complex that acts as a GTP-hydrolysis-dependent molecular chaperone, activating the urease apoprotein by helping to assemble the nickel containing metallocenter of UreC. The UreE protein probably delivers the nickel.

The protein localises to the cytoplasm. Facilitates the functional incorporation of the urease nickel metallocenter. This process requires GTP hydrolysis, probably effectuated by UreG. The protein is Urease accessory protein UreG of Rhizobium etli (strain ATCC 51251 / DSM 11541 / JCM 21823 / NBRC 15573 / CFN 42).